Reading from the N-terminus, the 218-residue chain is NAD(P)H-quinone oxidoreductase subunit I (218 aa).

2 consecutive 4Fe-4S ferredoxin-type domains span residues 55 to 84 and 95 to 124; these read GRIH…VDWV and RNYS…MTEE. Positions 64, 67, 70, 74, 104, 107, 110, and 114 each coordinate [4Fe-4S] cluster. Residues 169–218 form a disordered region; it reads MDPHELPANQQRAGKLPSQIIKELQAEKSEEKGNNNSSDIVPNKLNSTNK. Residues 192–201 are compositionally biased toward basic and acidic residues; that stretch reads LQAEKSEEKG. The segment covering 202 to 218 has biased composition (polar residues); it reads NNNSSDIVPNKLNSTNK.

The protein belongs to the complex I 23 kDa subunit family. In terms of assembly, NDH-1 is composed of at least 11 different subunits. Requires [4Fe-4S] cluster as cofactor.

The protein localises to the cellular thylakoid membrane. It catalyses the reaction a plastoquinone + NADH + (n+1) H(+)(in) = a plastoquinol + NAD(+) + n H(+)(out). The enzyme catalyses a plastoquinone + NADPH + (n+1) H(+)(in) = a plastoquinol + NADP(+) + n H(+)(out). Its function is as follows. NDH-1 shuttles electrons from an unknown electron donor, via FMN and iron-sulfur (Fe-S) centers, to quinones in the respiratory and/or the photosynthetic chain. The immediate electron acceptor for the enzyme in this species is believed to be plastoquinone. Couples the redox reaction to proton translocation, and thus conserves the redox energy in a proton gradient. The protein is NAD(P)H-quinone oxidoreductase subunit I of Prochlorococcus marinus (strain NATL1A).